Here is a 347-residue protein sequence, read N- to C-terminus: ATPase GET3 (347 aa).

26–33 (KGGVGKTT) is a binding site for ATP. Asp-57 is an active-site residue. Glu-240 and Asn-267 together coordinate ATP. The Zn(2+) site is built by Cys-279 and Cys-282.

It belongs to the arsA ATPase family. As to quaternary structure, homodimer. Component of the Golgi to ER traffic (GET) complex, which is composed of GET1, GET2 and GET3. Within the complex, GET1 and GET2 form a heterotetramer which is stabilized by phosphatidylinositol binding and which binds to the GET3 homodimer. Interacts with the chloride channel protein GEF1.

The protein resides in the cytoplasm. It is found in the endoplasmic reticulum. It localises to the golgi apparatus. Its function is as follows. ATPase required for the post-translational delivery of tail-anchored (TA) proteins to the endoplasmic reticulum. Recognizes and selectively binds the transmembrane domain of TA proteins in the cytosol. This complex then targets to the endoplasmic reticulum by membrane-bound receptors GET1 and GET2, where the tail-anchored protein is released for insertion. This process is regulated by ATP binding and hydrolysis. ATP binding drives the homodimer towards the closed dimer state, facilitating recognition of newly synthesized TA membrane proteins. ATP hydrolysis is required for insertion. Subsequently, the homodimer reverts towards the open dimer state, lowering its affinity for the GET1-GET2 receptor, and returning it to the cytosol to initiate a new round of targeting. Cooperates with the HDEL receptor ERD2 to mediate the ATP-dependent retrieval of resident ER proteins that contain a C-terminal H-D-E-L retention signal from the Golgi to the ER. Involved in low-level resistance to the oxyanions arsenite and arsenate, and in heat tolerance. The sequence is that of ATPase GET3 from Scheffersomyces stipitis (strain ATCC 58785 / CBS 6054 / NBRC 10063 / NRRL Y-11545) (Yeast).